Here is a 405-residue protein sequence, read N- to C-terminus: Argininosuccinate synthase (405 aa).

Residues 10 to 18 (AYSGGLDTS) and alanine 37 contribute to the ATP site. Residues tyrosine 88 and serine 93 each coordinate L-citrulline. Glycine 118 serves as a coordination point for ATP. L-aspartate is bound by residues threonine 120, asparagine 124, and aspartate 125. Asparagine 124 is a binding site for L-citrulline. Arginine 128, serine 179, serine 188, glutamate 264, and tyrosine 276 together coordinate L-citrulline.

It belongs to the argininosuccinate synthase family. Type 1 subfamily. In terms of assembly, homotetramer.

It localises to the cytoplasm. It catalyses the reaction L-citrulline + L-aspartate + ATP = 2-(N(omega)-L-arginino)succinate + AMP + diphosphate + H(+). It participates in amino-acid biosynthesis; L-arginine biosynthesis; L-arginine from L-ornithine and carbamoyl phosphate: step 2/3. In Pseudomonas savastanoi pv. phaseolicola (strain 1448A / Race 6) (Pseudomonas syringae pv. phaseolicola (strain 1448A / Race 6)), this protein is Argininosuccinate synthase.